We begin with the raw amino-acid sequence, 7705 residues long: Copine family protein 2 (7705 aa).

9 disordered regions span residues 1-61 (MNDY…RHSE), 269-360 (KEGN…NNSQ), 372-408 (SERK…HQQP), 464-492 (GDRA…TSSV), 506-538 (STEP…TADG), 560-614 (DERA…QGPP), 1301-1358 (NRSE…DQQV), 4381-4427 (ELEP…RSES), and 6779-6800 (RDEH…GKFT). The span at 12-25 (SSQKSNNQKISNNS) shows a compositional bias: low complexity. Positions 269-282 (KEGNNPSCCRERGT) are enriched in basic and acidic residues. Low complexity predominate over residues 302–313 (STSTKVAVTSAS). Residues 318–336 (IKDHKKQLKKEKEKKKKMD) show a composition bias toward basic residues. Over residues 372-404 (SERKTAKQREQELLQRSERRSGGRTHSHEEYRR) the composition is skewed to basic and acidic residues. Positions 522–532 (ASLSSVQQKQP) are enriched in polar residues. Residues 560–587 (DERAKDFLRGDRSSRLSPQSERKNERQI) show a composition bias toward basic and acidic residues. Positions 588-597 (QIRQQSSGPT) are enriched in polar residues. 2 stretches are compositionally biased toward basic and acidic residues: residues 598-611 (NRRE…EKRQ) and 1301-1335 (NRSE…HTSE). Over residues 4397-4409 (RQSRVYRSSSQVR) the composition is skewed to low complexity. 2 stretches are compositionally biased toward basic and acidic residues: residues 4411–4427 (PSEE…RSES) and 6779–6797 (RDEH…RDGG). The VWFA domain occupies 7475 to 7673 (NLIFGIDYTK…FHKVMFNAPN (199 aa)).

This sequence belongs to the copine family. Expressed in body wall muscle.

The polypeptide is Copine family protein 2 (cpna-2) (Caenorhabditis elegans).